Here is a 106-residue protein sequence, read N- to C-terminus: 1-deoxy-D-xylulose 5-phosphate reductoisomerase (106 aa).

Asp-3 is a Mn(2+) binding site. 8 residues coordinate 1-deoxy-D-xylulose 5-phosphate: Ser-4, Glu-5, Ser-29, His-52, Ser-65, Asn-70, Lys-71, and Glu-74. Glu-5 serves as a coordination point for Mn(2+). Glu-74 lines the Mn(2+) pocket.

It belongs to the DXR family. Mn(2+) is required as a cofactor. Requires Mg(2+) as cofactor.

It is found in the plastid. The protein resides in the chloroplast stroma. The catalysed reaction is 2-C-methyl-D-erythritol 4-phosphate + NADP(+) = 1-deoxy-D-xylulose 5-phosphate + NADPH + H(+). Its pathway is isoprenoid biosynthesis; isopentenyl diphosphate biosynthesis via DXP pathway; isopentenyl diphosphate from 1-deoxy-D-xylulose 5-phosphate: step 1/6. Its function is as follows. Enzyme of the plastid non-mevalonate pathway for isoprenoid biosynthesis that catalyzes the NADPH-dependent rearrangement and reduction of 1-deoxy-D-xylulose-5-phosphate (DXP) to 2-C-methyl-D-erythritol 4-phosphate (MEP). Required for chloroplast development. This Origanum vulgare (Wild marjoram) protein is 1-deoxy-D-xylulose 5-phosphate reductoisomerase.